The following is a 729-amino-acid chain: Fatty acid oxidation complex subunit alpha (729 aa).

The segment at 1-189 (MLYKGDTLYL…KIGLVDGVVA (189 aa)) is enoyl-CoA hydratase/isomerase. Position 296 (Asp296) interacts with substrate. Residues 311–729 (ETPKHAAVLG…ARPVGALKTA (419 aa)) are 3-hydroxyacyl-CoA dehydrogenase. NAD(+) contacts are provided by residues Met324, Asp343, 400 to 402 (VVE), Lys407, and Ser429. His450 (for 3-hydroxyacyl-CoA dehydrogenase activity) is an active-site residue. Asn453 is a binding site for NAD(+). Asn500 and Tyr660 together coordinate substrate.

The protein in the N-terminal section; belongs to the enoyl-CoA hydratase/isomerase family. It in the C-terminal section; belongs to the 3-hydroxyacyl-CoA dehydrogenase family. In terms of assembly, heterotetramer of two alpha chains (FadB) and two beta chains (FadA).

It carries out the reaction a (3S)-3-hydroxyacyl-CoA + NAD(+) = a 3-oxoacyl-CoA + NADH + H(+). The catalysed reaction is a (3S)-3-hydroxyacyl-CoA = a (2E)-enoyl-CoA + H2O. The enzyme catalyses a 4-saturated-(3S)-3-hydroxyacyl-CoA = a (3E)-enoyl-CoA + H2O. It catalyses the reaction (3S)-3-hydroxybutanoyl-CoA = (3R)-3-hydroxybutanoyl-CoA. It carries out the reaction a (3Z)-enoyl-CoA = a 4-saturated (2E)-enoyl-CoA. The catalysed reaction is a (3E)-enoyl-CoA = a 4-saturated (2E)-enoyl-CoA. The protein operates within lipid metabolism; fatty acid beta-oxidation. In terms of biological role, involved in the aerobic and anaerobic degradation of long-chain fatty acids via beta-oxidation cycle. Catalyzes the formation of 3-oxoacyl-CoA from enoyl-CoA via L-3-hydroxyacyl-CoA. It can also use D-3-hydroxyacyl-CoA and cis-3-enoyl-CoA as substrate. The sequence is that of Fatty acid oxidation complex subunit alpha from Klebsiella pneumoniae subsp. pneumoniae (strain ATCC 700721 / MGH 78578).